The sequence spans 656 residues: Protein arginine N-methyltransferase 7 (656 aa).

SAM-dependent MTase PRMT-type domains are found at residues 12–338 (EREW…FSIW) and 343–656 (GKDS…QSGN).

This sequence belongs to the class I-like SAM-binding methyltransferase superfamily. Protein arginine N-methyltransferase family. PRMT7 subfamily.

Functionally, arginine methyltransferase that can both catalyze the formation of omega-N monomethylarginine (MMA) and symmetrical dimethylarginine (sDMA). In Caenorhabditis briggsae, this protein is Protein arginine N-methyltransferase 7 (prmt-7).